The chain runs to 91 residues: Cell division topological specificity factor (91 aa).

Belongs to the MinE family.

Prevents the cell division inhibition by proteins MinC and MinD at internal division sites while permitting inhibition at polar sites. This ensures cell division at the proper site by restricting the formation of a division septum at the midpoint of the long axis of the cell. The chain is Cell division topological specificity factor from Wigglesworthia glossinidia brevipalpis.